The primary structure comprises 67 residues: DNA-directed RNA polymerase subunit omega (67 aa).

The protein belongs to the RNA polymerase subunit omega family. In terms of assembly, the RNAP catalytic core consists of 2 alpha, 1 beta, 1 beta' and 1 omega subunit. When a sigma factor is associated with the core the holoenzyme is formed, which can initiate transcription.

It catalyses the reaction RNA(n) + a ribonucleoside 5'-triphosphate = RNA(n+1) + diphosphate. Promotes RNA polymerase assembly. Latches the N- and C-terminal regions of the beta' subunit thereby facilitating its interaction with the beta and alpha subunits. The protein is DNA-directed RNA polymerase subunit omega of Burkholderia ambifaria (strain MC40-6).